We begin with the raw amino-acid sequence, 88 residues long: Small ribosomal subunit protein uS15 (88 aa).

Belongs to the universal ribosomal protein uS15 family. As to quaternary structure, part of the 30S ribosomal subunit. Forms a bridge to the 50S subunit in the 70S ribosome, contacting the 23S rRNA.

In terms of biological role, one of the primary rRNA binding proteins, it binds directly to 16S rRNA where it helps nucleate assembly of the platform of the 30S subunit by binding and bridging several RNA helices of the 16S rRNA. Forms an intersubunit bridge (bridge B4) with the 23S rRNA of the 50S subunit in the ribosome. The protein is Small ribosomal subunit protein uS15 of Variovorax paradoxus (strain S110).